The chain runs to 2174 residues: Spectinabilin polyketide synthase system protein NorB (2174 aa).

Residues 34 to 459 enclose the Ketosynthase family 3 (KS3) domain; sequence REPVAVVAMG…GTNAHVILEQ (426 aa). Residues cysteine 206, histidine 341, and histidine 381 each act as for beta-ketoacyl synthase activity in the active site. The Malonyl-CoA:ACP transacylase (MAT) domain occupies 567 to 888; the sequence is FLFSGQGSQR…AAVSRAFVQG (322 aa). Residues 938-1060 are N-terminal hotdog fold; sequence HPLLGACLEL…GQLAPEAAAP (123 aa). The 275-residue stretch at 938–1212 folds into the PKS/mFAS DH domain; sequence HPLLGACLEL…TRPITAGQLR (275 aa). Histidine 970 acts as the Proton acceptor; for dehydratase activity in catalysis. A disordered region spans residues 1056 to 1075; it reads EAAAPPAAPGEDWPPPGAEP. The span at 1061–1074 shows a compositional bias: pro residues; sequence PAAPGEDWPPPGAE. Positions 1073–1212 are C-terminal hotdog fold; sequence AEPVPLEGFY…TRPITAGQLR (140 aa). The active-site Proton donor; for dehydratase activity is the aspartate 1134. Positions 1424-1726 constitute an Enoyl reductase (ER) domain; sequence GTVDDLVLAP…QARNVGKLVL (303 aa). One can recognise a Ketoreductase (KR) domain in the interval 1736–1915; that stretch reads GTILVTGGYG…ATALAWGMWA (180 aa). One can recognise a Carrier domain in the interval 2017–2092; it reads PAVRELVRGQ…ALTDAIEARL (76 aa). Serine 2052 is subject to O-(pantetheine 4'-phosphoryl)serine.

As to quaternary structure, the spectinabilin polyketide synthase complex is composed of 4 proteins, NorA, NorA', NorB and NorC. The complex comprises 6 modules with a total of 28 catalytic domains catalyzing 7 chain elongations. NorA comprises one module, NorA' two modules, NorB one module and NorC two modules. It depends on pantetheine 4'-phosphate as a cofactor.

The enzyme catalyses 4-nitrobenzoyl-CoA + 6 (S)-methylmalonyl-CoA + malonyl-CoA + 6 NADPH + 12 H(+) = demethyldeoxyspectinabilin + 7 CO2 + 6 NADP(+) + 8 CoA + 5 H2O. The protein operates within antibiotic biosynthesis. It participates in polyketide biosynthesis. Functionally, component of a type I modular polyketide synthase (PKS) that generates the backbone of the antibiotic spectinabilin (also known as neoaureothin), a nitroaryl-substituted polyketide metabolite. This PKS system accepts the unusual starter unit 4-nitrobenzoyl-CoA and extends it by 6 molecules of (S)-methylmalonyl-CoA and a single molecule of malonyl-CoA. This is Spectinabilin polyketide synthase system protein NorB from Streptomyces orinoci (Streptoverticillium orinoci).